Here is a 240-residue protein sequence, read N- to C-terminus: Uridylate kinase (240 aa).

Position 12–15 (12–15) interacts with ATP; the sequence is KLSG. The tract at residues 20 to 25 is involved in allosteric activation by GTP; it reads GEKGFG. Residue glycine 54 coordinates UMP. Positions 55 and 59 each coordinate ATP. UMP-binding positions include aspartate 74 and 135–142; that span reads TGSPYFST. The ATP site is built by asparagine 163, tyrosine 169, and aspartate 172.

Belongs to the UMP kinase family. In terms of assembly, homohexamer.

Its subcellular location is the cytoplasm. It catalyses the reaction UMP + ATP = UDP + ADP. The protein operates within pyrimidine metabolism; CTP biosynthesis via de novo pathway; UDP from UMP (UMPK route): step 1/1. With respect to regulation, allosterically activated by GTP. Inhibited by UTP. In terms of biological role, catalyzes the reversible phosphorylation of UMP to UDP. This chain is Uridylate kinase, found in Lactiplantibacillus plantarum (strain ATCC BAA-793 / NCIMB 8826 / WCFS1) (Lactobacillus plantarum).